A 650-amino-acid chain; its full sequence is MLRVQLTDGHTSCTAVELNHLSKISLNTPPGTKIKLLGTIEVKNGYLLLDDTNTVVLGGEVEHLIEKWELQRSLSKHSRSNIGIEGGPPPFVPFGQRCASVASVDSKELDSRKTLQASSVTKAVGENDEFEKQRTAAIAEVAKSKETKTFGGGGNAGSNLNPGAGGSRNREVFQKEKIIRAEGKSEGVYRELVDEKALRHITEMGFCKDAARQALMDHSNNVEAALNFLLTGSKPKVVQGPPPRGKGKGRGRTRGEEDDELTSARPSAPSTLFDFLESKMGSFSIEDNKSHSQAQSQTHPKALNLEQNGIKDYNQPRQFTRNDTRAPRNEKPPRFQKEIQASRQYEGNGPPKSRGPEKQSSSVAEHWMEDRNKCERGYPRNDRLKDFSHPPSNHQNEGSYRKSCNNPMQSRGIKGGNHTEVKVEFHHQNSTTEGSHQKRGKKDDQRYNSEFYTDRRARTGNNETVASTPNEKCFSANNELSNFQTILIKEGANDLSNGEVDQKARRFGPIKPIGTNLNSTHDDKSKMFSYNNTKKKSGSIKPDKPLEAVYSGFSWRSGDECLALYWEDNKYYRAEVEALHSSGTTAVVKFSDYGNYEEVLLENIRPIQAEAWEEEGEFGDSLDFRRGGDGQPRRSTRPTQQFYQPPRARN.

Residues 147 to 169 (TKTFGGGGNAGSNLNPGAGGSRN) form a disordered region. The 41-residue stretch at 192–232 (LVDEKALRHITEMGFCKDAARQALMDHSNNVEAALNFLLTG) folds into the UBA domain. 3 disordered regions span residues 233 to 271 (SKPKVVQGPPPRGKGKGRGRTRGEEDDELTSARPSAPST), 286 to 406 (EDNK…SCNN), and 427 to 447 (HQNSTTEGSHQKRGKKDDQRY). Composition is skewed to basic and acidic residues over residues 320 to 337 (TRNDTRAPRNEKPPRFQK) and 366 to 388 (HWMEDRNKCERGYPRNDRLKDFS). Over residues 390–406 (PPSNHQNEGSYRKSCNN) the composition is skewed to polar residues. A Tudor domain is found at 554-614 (SWRSGDECLA…RPIQAEAWEE (61 aa)). The tract at residues 616 to 650 (GEFGDSLDFRRGGDGQPRRSTRPTQQFYQPPRARN) is disordered. Positions 622-632 (LDFRRGGDGQP) are enriched in basic and acidic residues.

As to quaternary structure, component of mRNA stress granules.

The protein resides in the cytoplasm. It localises to the nucleus. Its function is as follows. Scaffolding protein that specifically recognizes and binds dimethylarginine-containing proteins. Plays a role in the regulation of translation of target mRNAs by binding Arg/Gly-rich motifs (GAR) in dimethylarginine-containing proteins. In nucleus, acts as a coactivator: recognizes and binds asymmetric dimethylation on the core histone tails associated with transcriptional activation (H3R17me2a and H4R3me2a) and recruits proteins at these arginine-methylated loci. In cytoplasm, acts as an antiviral factor that participates in the assembly of stress granules together with G3BP1. The protein is Tudor domain-containing protein 3 (tdrd3) of Xenopus laevis (African clawed frog).